A 391-amino-acid chain; its full sequence is ATP phosphoribosyltransferase regulatory subunit (391 aa).

Belongs to the class-II aminoacyl-tRNA synthetase family. HisZ subfamily. In terms of assembly, heteromultimer composed of HisG and HisZ subunits.

Its subcellular location is the cytoplasm. Its pathway is amino-acid biosynthesis; L-histidine biosynthesis; L-histidine from 5-phospho-alpha-D-ribose 1-diphosphate: step 1/9. Functionally, required for the first step of histidine biosynthesis. May allow the feedback regulation of ATP phosphoribosyltransferase activity by histidine. The polypeptide is ATP phosphoribosyltransferase regulatory subunit (Nitrosomonas europaea (strain ATCC 19718 / CIP 103999 / KCTC 2705 / NBRC 14298)).